Here is a 159-residue protein sequence, read N- to C-terminus: MNIKFVVVGKLKEKYFKQGIAEYAKRLSRFCKFSIVEVPDEKAPENLSQAEMDRVMAEEGERILAKIKDREYVYALAILGKERSSEAFAKEIKDLTTYGHSDITFVIGGSLGLTPAVLKRADTQISFGKFTLPHQLMRLVLTEQVYRAFMINEGSPYHK.

Positions 76 and 108 each coordinate S-adenosyl-L-methionine.

It belongs to the RNA methyltransferase RlmH family. Homodimer.

It localises to the cytoplasm. It carries out the reaction pseudouridine(1915) in 23S rRNA + S-adenosyl-L-methionine = N(3)-methylpseudouridine(1915) in 23S rRNA + S-adenosyl-L-homocysteine + H(+). In terms of biological role, specifically methylates the pseudouridine at position 1915 (m3Psi1915) in 23S rRNA. The sequence is that of Ribosomal RNA large subunit methyltransferase H from Levilactobacillus brevis (strain ATCC 367 / BCRC 12310 / CIP 105137 / JCM 1170 / LMG 11437 / NCIMB 947 / NCTC 947) (Lactobacillus brevis).